The chain runs to 854 residues: DNA mismatch repair protein MutS (854 aa).

An ATP-binding site is contributed by 614 to 621; that stretch reads GPNMGGKS.

It belongs to the DNA mismatch repair MutS family.

This protein is involved in the repair of mismatches in DNA. It is possible that it carries out the mismatch recognition step. This protein has a weak ATPase activity. The polypeptide is DNA mismatch repair protein MutS (Yersinia pestis bv. Antiqua (strain Antiqua)).